The primary structure comprises 161 residues: Protein-export protein SecB (161 aa).

It belongs to the SecB family. As to quaternary structure, homotetramer, a dimer of dimers. One homotetramer interacts with 1 SecA dimer.

It localises to the cytoplasm. Functionally, one of the proteins required for the normal export of preproteins out of the cell cytoplasm. It is a molecular chaperone that binds to a subset of precursor proteins, maintaining them in a translocation-competent state. It also specifically binds to its receptor SecA. The protein is Protein-export protein SecB of Coxiella burnetii (strain Dugway 5J108-111).